The following is a 986-amino-acid chain: Ephrin type-A receptor 4-A (986 aa).

The N-terminal stretch at 1–20 (MAGIVHGILFCGLFGLCWAV) is a signal peptide. Residues 21 to 547 (TGSRIYPASE…MIGEGASPTV (527 aa)) are Extracellular-facing. The region spanning 30 to 209 (EVTLLDSRSV…FYKKCPLTVR (180 aa)) is the Eph LBD domain. 2 Fibronectin type-III domains span residues 328–438 (PPSA…TNQA) and 439–536 (APST…TVPS). Asparagine 340 and asparagine 407 each carry an N-linked (GlcNAc...) asparagine glycan. Residues 548–569 (LLVSVAGSIVLVVILIAAFVIS) form a helical membrane-spanning segment. At 570-986 (RRRSKYSKAK…QQIQGRMVPV (417 aa)) the chain is on the cytoplasmic side. 2 positions are modified to phosphotyrosine; by autocatalysis: tyrosine 595 and tyrosine 601. One can recognise a Protein kinase domain in the interval 620–881 (IKIEKVIGVG…QIVSMLDKLI (262 aa)). ATP contacts are provided by residues 626-634 (IGVGEFGEV) and lysine 652. Residue aspartate 745 is the Proton acceptor of the active site. Residues tyrosine 778 and tyrosine 928 each carry the phosphotyrosine; by autocatalysis modification. The SAM domain occupies 911-975 (SQVASVLDWL…LSSVQGMRTQ (65 aa)). The PDZ-binding motif lies at 984–986 (VPV).

This sequence belongs to the protein kinase superfamily. Tyr protein kinase family. Ephrin receptor subfamily.

It localises to the cell membrane. The protein localises to the early endosome. The catalysed reaction is L-tyrosyl-[protein] + ATP = O-phospho-L-tyrosyl-[protein] + ADP + H(+). Receptor tyrosine kinase which binds membrane-bound ephrin family ligands residing on adjacent cells, leading to contact-dependent bidirectional signaling into neighboring cells. The signaling pathway downstream of the receptor is referred to as forward signaling while the signaling pathway downstream of the ephrin ligand is referred to as reverse signaling. Highly promiscuous, it has the unique property among Eph receptors to bind and to be physiologically activated by both GPI-anchored ephrin-A and transmembrane ephrin-B ligands including EFNA1 and EFNB3. Upon activation by ephrin ligands, modulates cell morphology and integrin-dependent cell adhesion through regulation of the Rac, Rap and Rho GTPases activity. Plays an important role in the development of the nervous system controlling different steps of axonal guidance including the establishment of the corticospinal projections. The sequence is that of Ephrin type-A receptor 4-A (epha4-a) from Xenopus laevis (African clawed frog).